A 245-amino-acid chain; its full sequence is Orotidine 5'-phosphate decarboxylase (245 aa).

Substrate-binding positions include Asp-22, Lys-44, 71-80 (DLKFHDIPNT), Thr-131, Arg-192, Gln-201, Gly-221, and Arg-222. The active-site Proton donor is the Lys-73.

The protein belongs to the OMP decarboxylase family. Type 1 subfamily. In terms of assembly, homodimer.

It carries out the reaction orotidine 5'-phosphate + H(+) = UMP + CO2. It functions in the pathway pyrimidine metabolism; UMP biosynthesis via de novo pathway; UMP from orotate: step 2/2. Catalyzes the decarboxylation of orotidine 5'-monophosphate (OMP) to uridine 5'-monophosphate (UMP). This is Orotidine 5'-phosphate decarboxylase from Klebsiella pneumoniae (strain 342).